A 260-amino-acid polypeptide reads, in one-letter code: NADH-ubiquinone oxidoreductase chain 6 (260 aa).

The next 6 membrane-spanning stretches (helical) occupy residues leucine 2–isoleucine 22, serine 30–valine 50, phenylalanine 52–valine 72, phenylalanine 101–phenylalanine 121, valine 142–isoleucine 162, and phenylalanine 211–leucine 231.

The protein belongs to the complex I subunit 6 family.

The protein localises to the mitochondrion membrane. The enzyme catalyses a ubiquinone + NADH + 5 H(+)(in) = a ubiquinol + NAD(+) + 4 H(+)(out). In terms of biological role, core subunit of the mitochondrial membrane respiratory chain NADH dehydrogenase (Complex I) that is believed to belong to the minimal assembly required for catalysis. Complex I functions in the transfer of electrons from NADH to the respiratory chain. The immediate electron acceptor for the enzyme is believed to be ubiquinone. The chain is NADH-ubiquinone oxidoreductase chain 6 (ND6) from Acanthamoeba castellanii (Amoeba).